The sequence spans 961 residues: Outer capsid protein VP2 (961 aa).

It belongs to the orbivirus VP2 family.

The protein resides in the virion. In terms of biological role, the VP2 protein is one of the two proteins (with VP5) which constitute the virus particle outer capsid. It is the major target of the host immunogenic response. Responsible for viral attachment to target host cell, probably by binding to sialic acid. This attachment induces virion internalization predominantly through clathrin-dependent endocytosis. The protein is Outer capsid protein VP2 (Segment-2) of Bluetongue virus 1 (isolate South Africa vaccine) (BTV 1).